A 364-amino-acid polypeptide reads, in one-letter code: MSKPVNLVLLYGGKSGEHEVSLVSAASVLKHLDSEKYHIIPIAMDKSGRFHRHDYNDLLACSDKLPVVTEKSTPLEGLLINGRLAVDAEIVFPVVHGPLYEDGCLQGLLELAGVAYVGCDVLSSAIGMDKDMARRLACINGLKSARYKLLSWHANASERQQFCHEVASEFGWPLFVKPCSLGSSVGIHKANNMDELNAAVADALRYDEEILVEEFIVGREIELAVLENSIPCGKPRVSMVGEIKVNHPDGYYSYTAKYLESSQTDLIIPAQLNNSLEEQLKQAAANIFSYLKCKGMARVDFFVNDKTEEIYFNEINTLPGFTSISMYPKLWQATGIAYPDLLDELINLAMIHHNCRQHLVTNYL.

In terms of domain architecture, ATP-grasp spans 134–347 (RRLACINGLK…YPDLLDELIN (214 aa)). Residue 167–222 (ASEFGWPLFVKPCSLGSSVGIHKANNMDELNAAVADALRYDEEILVEEFIVGREIE) coordinates ATP. Asp300, Glu314, and Asn316 together coordinate Mg(2+).

Belongs to the D-alanine--D-alanine ligase family. The cofactor is Mg(2+). Mn(2+) serves as cofactor.

The protein resides in the cytoplasm. It carries out the reaction 2 D-alanine + ATP = D-alanyl-D-alanine + ADP + phosphate + H(+). It participates in cell wall biogenesis; peptidoglycan biosynthesis. Functionally, cell wall formation. The sequence is that of D-alanine--D-alanine ligase from Legionella pneumophila (strain Lens).